We begin with the raw amino-acid sequence, 442 residues long: U11/U12 small nuclear ribonucleoprotein 65 kDa protein (442 aa).

Residues 28–102 form the RRM 1 domain; it reads VTLLVRHLPD…KVLQVQRANK (75 aa). Disordered regions lie at residues 101–138, 200–242, and 290–317; these read NKPN…QILS, LALP…GRKR, and SKVT…DSNL. Basic and acidic residues predominate over residues 102–116; sequence KPNDNKKSRQIEESV. The segment covering 117-136 has biased composition (polar residues); sequence TKGNAFSTVSTNNDSKSGQI. The segment covering 200–209 has biased composition (pro residues); that stretch reads LALPTPPLPK. The span at 297–307 shows a compositional bias: acidic residues; sequence YKEESENEDPA. Residues 352–434 enclose the RRM 2 domain; it reads VVLYIKNLAK…KPMIIQFGRT (83 aa).

In terms of assembly, component of the U11/U12 snRNPs that are part of the U12-type spliceosome. Forms a complex with U12 snRNA. In terms of tissue distribution, ubiquitous.

It is found in the nucleus. Functionally, component of minor spliceosome required for U12-type intron splicing and alternative splicing of many introns. Binds specifically to U12 snRNA, which is necessary for branch-point site recognition. Required for normal plant development. The sequence is that of U11/U12 small nuclear ribonucleoprotein 65 kDa protein (SNRNP65) from Arabidopsis thaliana (Mouse-ear cress).